Reading from the N-terminus, the 74-residue chain is Exodeoxyribonuclease 7 small subunit (74 aa).

It belongs to the XseB family. As to quaternary structure, heterooligomer composed of large and small subunits.

Its subcellular location is the cytoplasm. The catalysed reaction is Exonucleolytic cleavage in either 5'- to 3'- or 3'- to 5'-direction to yield nucleoside 5'-phosphates.. Bidirectionally degrades single-stranded DNA into large acid-insoluble oligonucleotides, which are then degraded further into small acid-soluble oligonucleotides. The polypeptide is Exodeoxyribonuclease 7 small subunit (Haemophilus ducreyi (strain 35000HP / ATCC 700724)).